The primary structure comprises 315 residues: MDALLKEIEKLSQPSLQKENNDVCDLCFMQMKKISNYQLLCEECGQLKDWFEPEYNEKFTVYSRLKIVGANSSYHQRDLDKANSSDYSSLQFHHILEELKTLNVKYMDAGQKPFPIQVLKETAHSYNQVQQHRVIRSITKLQILASILRSICLKLNIACTVADAARFTQLNTKGISRGMDLLRSLFVDNKITLNVDLNPIDSFINSTYNALQIKQIHQELQEENVYNLKEIVKSFILYADEKNIGVDLNRRTVVIATMYNVLRRAYYPIEIDTVVYQCKIRKNTITRALKMYEDYYSHFKSLYEQYHLNAAKKLI.

This sequence belongs to the asfivirus C315R family.

This is an uncharacterized protein from Ornithodoros (relapsing fever ticks).